The chain runs to 525 residues: Asparagine synthetase [glutamine-hydrolyzing] (525 aa).

Residue Cys2 is the For GATase activity of the active site. The region spanning 2–185 (CGILAVLGCS…PGHLYSSKEG (184 aa)) is the Glutamine amidotransferase type-2 domain. L-glutamine contacts are provided by residues 50–54 (RLAII), 75–77 (NGE), and Asp98. Positions 193-517 (PPWFSEVIPS…QIDSPWRSKC (325 aa)) constitute an Asparagine synthetase domain. ATP-binding positions include Leu231, Val267, and 341-342 (SG).

The enzyme catalyses L-aspartate + L-glutamine + ATP + H2O = L-asparagine + L-glutamate + AMP + diphosphate + H(+). The protein operates within amino-acid biosynthesis; L-asparagine biosynthesis; L-asparagine from L-aspartate (L-Gln route): step 1/1. Could play a role in remobilization of nitrogen in flowers during senescence. This is Asparagine synthetase [glutamine-hydrolyzing] (AND1) from Sandersonia aurantiaca (Christmas-bells).